Consider the following 67-residue polypeptide: Medusin-H1 (67 aa).

A signal peptide spans 1-22 (MDFLKKSLFLVLFLGFFSLSIC). The propeptide occupies 23 to 48 (EEEKRETEEKENEQEDDREERREEKR). The tract at residues 24–46 (EEKRETEEKENEQEDDREERREE) is disordered. The segment covering 31–40 (EKENEQEDDR) has biased composition (acidic residues). Residue Leu66 is modified to Leucine amide.

Belongs to the frog skin active peptide (FSAP) family. Medusin subfamily. As to expression, expressed by the skin glands.

The protein resides in the secreted. In terms of biological role, antimicrobial peptide with activity against Gram-positive bacteria (S.aureus, MIC=32 mg/L) and fungi (C.albicans, MIC=128 mg/L). Shows weak hemolytic activity. In Pithecopus hypochondrialis (Orange-legged leaf frog), this protein is Medusin-H1.